The sequence spans 212 residues: MTTQKIVPTKSTDGSKLFRHQAKFVAGAMNINQILNFSLPEIAFVGKSNVGKSSLINTICNNKNLAKVSNTPGRTRQINFFNLADKLIIVDLPGYGFANVPISVKEQWGVLISYYLRNSYNLRLVNLLIDSRRGIKENDKKVADLLLANKREFQIIFTKSDKVTDHKNLHDEAQNFLATLNYSCNVMYVSNRSKEGARELKASLAKCIKPQK.

Residues 38 to 210 (SLPEIAFVGK…KASLAKCIKP (173 aa)) enclose the EngB-type G domain. Residues 46 to 53 (GKSNVGKS), 73 to 77 (GRTRQ), 91 to 94 (DLPG), 158 to 161 (TKSD), and 189 to 191 (VSN) each bind GTP. 2 residues coordinate Mg(2+): serine 53 and threonine 75.

This sequence belongs to the TRAFAC class TrmE-Era-EngA-EngB-Septin-like GTPase superfamily. EngB GTPase family. Mg(2+) serves as cofactor.

Necessary for normal cell division and for the maintenance of normal septation. The polypeptide is Probable GTP-binding protein EngB (Rickettsia conorii (strain ATCC VR-613 / Malish 7)).